The chain runs to 299 residues: MYYDVLKTFIAVVEEKNFTKAAEKLMISQPSVSLHIKNLEKEFQTALLNRSPKHFTTTPTGDILYQRAKQMVFLYEQAKAEIYAHHHYVKGELKIAASFTIGEYILPPLLAQLQKLYPELNLDVMIGNTEEVSERVRMLQADIGLIEGHTNENELEIEPFMEDEMCIAAPNQHPLAGRKEISISDLQNEAWVTREKGSGTREYLDHVLSSNGLRPKSMFTISSNQGVKEAVINGMGLSVLSRSVLRKDLIHREISILHINNFSLKRKLSYIHSPLMENTKNKEIFITMLKSNYQSQLLK.

In terms of domain architecture, HTH lysR-type spans 1–58; that stretch reads MYYDVLKTFIAVVEEKNFTKAAEKLMISQPSVSLHIKNLEKEFQTALLNRSPKHFTTT. A DNA-binding region (H-T-H motif) is located at residues 18 to 37; the sequence is FTKAAEKLMISQPSVSLHIK.

Belongs to the LysR transcriptional regulatory family.

Its function is as follows. Transcriptional activator of the cysJI operon which is involved in sulfur assimilation. Also negatively regulates its own transcription. In Bacillus subtilis (strain 168), this protein is HTH-type transcriptional regulator CysL (cysL).